The sequence spans 173 residues: Ribosome maturation factor RimM (173 aa).

The PRC barrel domain occupies 96–169; the sequence is PDEYYDHQLE…LVEIDPPEGL (74 aa).

It belongs to the RimM family. Binds ribosomal protein uS19.

The protein localises to the cytoplasm. Its function is as follows. An accessory protein needed during the final step in the assembly of 30S ribosomal subunit, possibly for assembly of the head region. Essential for efficient processing of 16S rRNA. May be needed both before and after RbfA during the maturation of 16S rRNA. It has affinity for free ribosomal 30S subunits but not for 70S ribosomes. The polypeptide is Ribosome maturation factor RimM (Mycobacterium sp. (strain JLS)).